We begin with the raw amino-acid sequence, 295 residues long: Pantothenate synthetase (295 aa).

Position 30–37 (30–37 (MGNLHDGH)) interacts with ATP. The active-site Proton donor is histidine 37. Glutamine 61 serves as a coordination point for (R)-pantoate. Glutamine 61 lines the beta-alanine pocket. 149 to 152 (GEKD) is an ATP binding site. Glutamine 155 lines the (R)-pantoate pocket. ATP-binding positions include valine 178 and 186-189 (MSSR).

The protein belongs to the pantothenate synthetase family. Homodimer.

The protein localises to the cytoplasm. The catalysed reaction is (R)-pantoate + beta-alanine + ATP = (R)-pantothenate + AMP + diphosphate + H(+). It functions in the pathway cofactor biosynthesis; (R)-pantothenate biosynthesis; (R)-pantothenate from (R)-pantoate and beta-alanine: step 1/1. Its function is as follows. Catalyzes the condensation of pantoate with beta-alanine in an ATP-dependent reaction via a pantoyl-adenylate intermediate. The chain is Pantothenate synthetase from Photobacterium profundum (strain SS9).